The primary structure comprises 95 residues: Small ribosomal subunit protein uS19 (95 aa).

Positions 73–95 (EFSPTRTYRGHGADKNAKGSKKK) are disordered.

The protein belongs to the universal ribosomal protein uS19 family.

Its function is as follows. Protein S19 forms a complex with S13 that binds strongly to the 16S ribosomal RNA. The chain is Small ribosomal subunit protein uS19 from Deinococcus radiodurans (strain ATCC 13939 / DSM 20539 / JCM 16871 / CCUG 27074 / LMG 4051 / NBRC 15346 / NCIMB 9279 / VKM B-1422 / R1).